The primary structure comprises 429 residues: Phosphoglucosamine mutase (429 aa).

The active-site Phosphoserine intermediate is the Ser-96. Mg(2+) is bound by residues Ser-96, Asp-230, Asp-232, and Asp-234. Position 96 is a phosphoserine (Ser-96).

Belongs to the phosphohexose mutase family. The cofactor is Mg(2+). Post-translationally, activated by phosphorylation.

The catalysed reaction is alpha-D-glucosamine 1-phosphate = D-glucosamine 6-phosphate. Catalyzes the conversion of glucosamine-6-phosphate to glucosamine-1-phosphate. The chain is Phosphoglucosamine mutase from Thermotoga maritima (strain ATCC 43589 / DSM 3109 / JCM 10099 / NBRC 100826 / MSB8).